Consider the following 64-residue polypeptide: Movement protein TGBp3 (64 aa).

The Lumenal segment spans residues 1 to 7 (MSLSYLD). The helical transmembrane segment at 8-28 (LLLAFGCVLAVSVIVNCFLVS) threads the bilayer. The Cytoplasmic portion of the chain corresponds to 29-64 (HNNCVIEITGEAVRISGCTFDRTFVELVKGLKPARH).

It belongs to the Tymovirales TGBp3 protein family.

It is found in the host endoplasmic reticulum membrane. In terms of biological role, plays a role in viral cell-to-cell propagation, by facilitating genome transport to neighboring plant cells through plasmosdesmata. May induce the formation of granular vesicles derived from the Endoplasmic reticulum, which align on actin filaments. The protein is Movement protein TGBp3 of Chrysanthemum morifolium (Florist's daisy).